The sequence spans 2320 residues: Sperm-associated antigen 17 (2320 aa).

Basic and acidic residues-rich tracts occupy residues 139–171 and 199–210; these read DQQR…EKKV and RRGEDDEAKSYI. 11 disordered regions span residues 139 to 211, 388 to 407, 682 to 739, 894 to 928, 950 to 1001, 1084 to 1118, 1191 to 1221, 1334 to 1367, 1393 to 1416, 1983 to 2028, and 2080 to 2101; these read DQQR…SYID, IPEP…KAQY, AEQD…SMDQ, SASK…EKDK, EERL…AKTL, KEKE…EKVK, QGKG…EKKN, SSPD…KSET, DIIP…TTTP, KEAS…YENV, and TKES…EEPD. Residues 703–720 are compositionally biased toward polar residues; sequence VTGSTSNSTKPWNSSNRQ. The stretch at 865–965 forms a coiled coil; sequence EEAKYQEAKM…EKKAEKKGKD (101 aa). Composition is skewed to basic and acidic residues over residues 914–928 and 950–999; these read ELSD…EKDK and EERL…EPAK. Residues 1090–1103 are compositionally biased toward acidic residues; it reads NSEEEEEEEEEKEE. 2 stretches are compositionally biased toward basic and acidic residues: residues 1104-1118 and 1203-1221; these read VEEK…EKVK and KHKD…EKKN. Polar residues-rich tracts occupy residues 2012–2028 and 2082–2094; these read VNKS…YENV and ESVS…NVTR.

Interacts (via the C-terminus) with SPAG6; the interaction probably occurs on polymerized microtubules. In terms of tissue distribution, highly expressed in testis, round spermatids, testicular sperm, epididymal sperm and in condensing spermatids (at protein level). Expressed in organs that contain cilia-bearing cells including brain, oviduct, lung, and uterus. Expressed in articular cartilage and bone.

Its subcellular location is the cytoplasm. The protein localises to the cytoskeleton. The protein resides in the flagellum axoneme. It is found in the cytoplasmic vesicle. It localises to the secretory vesicle. Its subcellular location is the acrosome. The protein localises to the golgi apparatus. Functionally, component of the central pair apparatus of ciliary axonemes. Plays a critical role in the function and structure of motile cilia. May play a role in endochondral bone formation, most likely because of a function in primary cilia of chondrocytes and osteoblasts. Essential for normal spermatogenesis and male fertility. Required for normal manchette structure, transport of proteins along the manchette microtubules and formation of the sperm head and flagellum. Essential for sperm flagellum development and proper assembly of the respiratory motile cilia central pair apparatus, but not the brain ependymal cilia. This chain is Sperm-associated antigen 17 (Spag17), found in Mus musculus (Mouse).